The primary structure comprises 536 residues: Probable monofunctional riboflavin biosynthesis protein RIBA 3, chloroplastic (536 aa).

The N-terminal 43 residues, 1–43, are a transit peptide targeting the chloroplast; it reads MDRVLLSSQLSSQTVVNTRVQQGSGGINSIGFAVIRKGSLKLR. Positions 44-310 are inactive DHBP synthase; sequence CYAIGGLGGG…IADLIRYRRK (267 aa). Residues 133 to 134, Asp138, and 248 to 252 each bind D-ribulose 5-phosphate; these read GD and RAGHT. Residues 311–536 form a GTP cyclohydrolase II region; sequence REKLVELIAV…GDQDEDDTHN (226 aa). Residue 361 to 365 participates in GTP binding; the sequence is RVHSE. 3 residues coordinate Zn(2+): Cys366, Cys377, and Cys379. GTP is bound by residues Gln382, 405 to 407, and Thr427; that span reads EGR. The active-site Proton acceptor; for GTP cyclohydrolase activity is the Asp439. The active-site Nucleophile; for GTP cyclohydrolase activity is the Arg441. 2 residues coordinate GTP: Thr462 and Lys467. The segment at 507-536 is disordered; sequence YGSDLPGNVPEEFLNPDDIAGDQDEDDTHN. Residues 525-536 are compositionally biased toward acidic residues; it reads IAGDQDEDDTHN.

It in the N-terminal section; belongs to the DHBP synthase family. The protein in the C-terminal section; belongs to the GTP cyclohydrolase II family. Zn(2+) is required as a cofactor.

Its subcellular location is the plastid. It localises to the chloroplast. It carries out the reaction GTP + 4 H2O = 2,5-diamino-6-hydroxy-4-(5-phosphoribosylamino)-pyrimidine + formate + 2 phosphate + 3 H(+). It functions in the pathway cofactor biosynthesis; riboflavin biosynthesis; 5-amino-6-(D-ribitylamino)uracil from GTP: step 1/4. Functionally, involved in riboflavin biosynthesis. Catalyzes the conversion of GTP to 2,5-diamino-6-ribosylamino-4(3H)-pyrimidinone 5'-phosphate (DARP), formate and pyrophosphate. This Oryza sativa subsp. japonica (Rice) protein is Probable monofunctional riboflavin biosynthesis protein RIBA 3, chloroplastic (RIBA3).